We begin with the raw amino-acid sequence, 371 residues long: Serpentine receptor class delta-1 (371 aa).

7 helical membrane passes run leucine 31–phenylalanine 51, alanine 62–alanine 82, cysteine 109–isoleucine 129, methionine 148–tryptophan 168, isoleucine 209–isoleucine 229, alanine 267–isoleucine 287, and isoleucine 295–isoleucine 315. A disordered region spans residues glutamate 344–valine 371. The span at threonine 354–alanine 365 shows a compositional bias: polar residues.

This sequence belongs to the nematode receptor-like protein srd family.

Its subcellular location is the membrane. The sequence is that of Serpentine receptor class delta-1 (srd-1) from Caenorhabditis elegans.